Consider the following 651-residue polypeptide: Endo-1,4-beta-xylanase A (651 aa).

An N-terminal signal peptide occupies residues Met1–Ala30. Residues Ile33–Asn227 form the GH11 domain. Glu124 serves as the catalytic Nucleophile. Catalysis depends on Glu214, which acts as the Proton donor. 3 consecutive CBM6 domains span residues Ser250–Ser370, Ser387–Thr507, and Ser527–Ser647. Positions 253 and 255 each coordinate Ca(2+). Thr270 is a D-xylotriose binding site. Ca(2+) is bound at residue Arg275. Repeat 1 spans residues Gly278 to Gln339. The 3 X 61 AA approximate repeats stretch occupies residues Gly278–Arg616. Residues Tyr279, Asn336, and Asn363 each coordinate D-xylotriose. Residues Tyr279, Asn336, and Asn363 each contribute to the D-xylobiose site. Position 365 (Asp365) interacts with Ca(2+). Repeat 2 spans residues Gly415–Gln476. Residues Gln530, Glu532, and Ser552 each coordinate Ca(2+). Residues Gly555–Arg616 form repeat 3. Tyr556, Asp613, and Asn640 together coordinate D-xylotriose. Position 642 (Asp642) interacts with Ca(2+).

This sequence belongs to the glycosyl hydrolase 11 (cellulase G) family.

It is found in the secreted. It catalyses the reaction Endohydrolysis of (1-&gt;4)-beta-D-xylosidic linkages in xylans.. It functions in the pathway glycan degradation; xylan degradation. Endoxylanase that degrades arabinoxylan and glucuronoxylan to xylobiose and xylotriose (in vitro). This Thermoclostridium stercorarium (Clostridium stercorarium) protein is Endo-1,4-beta-xylanase A (xynA).